The following is an 88-amino-acid chain: Sec-independent protein translocase protein TatA (88 aa).

A helical membrane pass occupies residues 1–21 (MGGISIWQLLIIALIVVLLFG). Residues 43–88 (MSSEEDKKALEDAEAAKPVQTAQTVQSAQPTQQATEKKPESNKEQA) are disordered. Over residues 46–57 (EEDKKALEDAEA) the composition is skewed to basic and acidic residues. Polar residues predominate over residues 62 to 76 (QTAQTVQSAQPTQQA). Over residues 77–88 (TEKKPESNKEQA) the composition is skewed to basic and acidic residues.

It belongs to the TatA/E family. As to quaternary structure, the Tat system comprises two distinct complexes: a TatABC complex, containing multiple copies of TatA, TatB and TatC subunits, and a separate TatA complex, containing only TatA subunits. Substrates initially bind to the TatABC complex, which probably triggers association of the separate TatA complex to form the active translocon.

The protein resides in the cell inner membrane. Functionally, part of the twin-arginine translocation (Tat) system that transports large folded proteins containing a characteristic twin-arginine motif in their signal peptide across membranes. TatA could form the protein-conducting channel of the Tat system. In Shewanella oneidensis (strain ATCC 700550 / JCM 31522 / CIP 106686 / LMG 19005 / NCIMB 14063 / MR-1), this protein is Sec-independent protein translocase protein TatA.